The sequence spans 273 residues: 4-hydroxy-tetrahydrodipicolinate reductase (273 aa).

NAD(+) contacts are provided by residues 8-13 (GACGRM), Glu34, 102-104 (GTT), and 128-131 (APNM). The active-site Proton donor/acceptor is the His160. A (S)-2,3,4,5-tetrahydrodipicolinate-binding site is contributed by His161. Lys164 functions as the Proton donor in the catalytic mechanism. 170-171 (GT) is a binding site for (S)-2,3,4,5-tetrahydrodipicolinate.

It belongs to the DapB family.

It localises to the cytoplasm. The catalysed reaction is (S)-2,3,4,5-tetrahydrodipicolinate + NAD(+) + H2O = (2S,4S)-4-hydroxy-2,3,4,5-tetrahydrodipicolinate + NADH + H(+). The enzyme catalyses (S)-2,3,4,5-tetrahydrodipicolinate + NADP(+) + H2O = (2S,4S)-4-hydroxy-2,3,4,5-tetrahydrodipicolinate + NADPH + H(+). It participates in amino-acid biosynthesis; L-lysine biosynthesis via DAP pathway; (S)-tetrahydrodipicolinate from L-aspartate: step 4/4. In terms of biological role, catalyzes the conversion of 4-hydroxy-tetrahydrodipicolinate (HTPA) to tetrahydrodipicolinate. The sequence is that of 4-hydroxy-tetrahydrodipicolinate reductase from Methanothermobacter thermautotrophicus (strain ATCC 29096 / DSM 1053 / JCM 10044 / NBRC 100330 / Delta H) (Methanobacterium thermoautotrophicum).